Reading from the N-terminus, the 403-residue chain is Tryptophan synthase beta chain 1 (403 aa).

K93 carries the N6-(pyridoxal phosphate)lysine modification.

Belongs to the TrpB family. In terms of assembly, tetramer of two alpha and two beta chains. It depends on pyridoxal 5'-phosphate as a cofactor.

It catalyses the reaction (1S,2R)-1-C-(indol-3-yl)glycerol 3-phosphate + L-serine = D-glyceraldehyde 3-phosphate + L-tryptophan + H2O. Its pathway is amino-acid biosynthesis; L-tryptophan biosynthesis; L-tryptophan from chorismate: step 5/5. Its function is as follows. The beta subunit is responsible for the synthesis of L-tryptophan from indole and L-serine. In Methanosarcina acetivorans (strain ATCC 35395 / DSM 2834 / JCM 12185 / C2A), this protein is Tryptophan synthase beta chain 1 (trpB1).